Here is a 551-residue protein sequence, read N- to C-terminus: Glucans biosynthesis protein D (551 aa).

Residues 1-32 (MDRRRFIKGSMAMAAVCGTSGIASLFSQAAFA) constitute a signal peptide (tat-type signal).

It belongs to the OpgD/OpgG family. In terms of processing, predicted to be exported by the Tat system. The position of the signal peptide cleavage has not been experimentally proven.

The protein localises to the periplasm. It functions in the pathway glycan metabolism; osmoregulated periplasmic glucan (OPG) biosynthesis. Probably involved in the control of the structural glucose backbone of osmoregulated periplasmic glucans (OPGs). This is Glucans biosynthesis protein D from Shigella dysenteriae serotype 1 (strain Sd197).